The sequence spans 379 residues: Cytochrome b (379 aa).

The next 4 helical transmembrane spans lie at Phe-33–Met-53, Trp-77–Ile-98, Trp-113–Leu-133, and Phe-178–Leu-198. 2 residues coordinate heme b: His-83 and His-97. Heme b is bound by residues His-182 and His-196. A ubiquinone is bound at residue His-201. 4 helical membrane-spanning segments follow: residues Met-226–Tyr-246, Leu-288–His-308, Leu-320–Gly-340, and Phe-347–Pro-367.

Belongs to the cytochrome b family. In terms of assembly, the cytochrome bc1 complex contains 11 subunits: 3 respiratory subunits (MT-CYB, CYC1 and UQCRFS1), 2 core proteins (UQCRC1 and UQCRC2) and 6 low-molecular weight proteins (UQCRH/QCR6, UQCRB/QCR7, UQCRQ/QCR8, UQCR10/QCR9, UQCR11/QCR10 and a cleavage product of UQCRFS1). This cytochrome bc1 complex then forms a dimer. The cofactor is heme b.

The protein resides in the mitochondrion inner membrane. Functionally, component of the ubiquinol-cytochrome c reductase complex (complex III or cytochrome b-c1 complex) that is part of the mitochondrial respiratory chain. The b-c1 complex mediates electron transfer from ubiquinol to cytochrome c. Contributes to the generation of a proton gradient across the mitochondrial membrane that is then used for ATP synthesis. The chain is Cytochrome b (MT-CYB) from Massoutiera mzabi (Mzab gundi).